Consider the following 272-residue polypeptide: Endoplasmic reticulum resident protein 27 (272 aa).

The N-terminal stretch at 1–25 (MEAMPSRCLFLLFLSTCKLSPEVVA) is a signal peptide. In terms of domain architecture, Thioredoxin spans 38–151 (EPMRLTDVQA…LVTEYNAITA (114 aa)). N-linked (GlcNAc...) asparagine glycosylation is present at Asn99. The interval 229-232 (DKWD) is PDIA3-binding site. The Prevents secretion from ER signature appears at 269 to 272 (KVEL).

It belongs to the protein disulfide isomerase family. Interacts with PDIA3.

The protein localises to the endoplasmic reticulum lumen. Its function is as follows. Specifically binds unfolded proteins and may recruit protein disulfide isomerase PDIA3 to unfolded substrates. Binds protein substrates via a hydrophobic pocket in the C-terminal domain. May play a role in the unfolded stress response. This Bos taurus (Bovine) protein is Endoplasmic reticulum resident protein 27 (ERP27).